Here is a 704-residue protein sequence, read N- to C-terminus: Ion-translocating oxidoreductase complex subunit C (704 aa).

4Fe-4S ferredoxin-type domains are found at residues 368–397 and 407–436; these read MGAP…QQLY and KATA…VQYF. Positions 377, 380, 383, 387, 416, 419, 422, and 426 each coordinate [4Fe-4S] cluster. The tract at residues 535–684 is disordered; sequence ARAKQAAHPM…PADPRKAAVA (150 aa). A compositionally biased stretch (low complexity) spans 556 to 565; sequence KAAVEAAIAR.

This sequence belongs to the 4Fe4S bacterial-type ferredoxin family. RnfC subfamily. The complex is composed of six subunits: RsxA, RsxB, RsxC, RsxD, RsxE and RsxG. [4Fe-4S] cluster is required as a cofactor.

Its subcellular location is the cell inner membrane. In terms of biological role, part of a membrane-bound complex that couples electron transfer with translocation of ions across the membrane. Required to maintain the reduced state of SoxR. In Salmonella paratyphi C (strain RKS4594), this protein is Ion-translocating oxidoreductase complex subunit C.